Reading from the N-terminus, the 461-residue chain is Cysteine--tRNA ligase (461 aa).

Residue C28 participates in Zn(2+) binding. Positions I30 to H40 match the 'HIGH' region motif. Zn(2+)-binding residues include C209, H234, and E238. The 'KMSKS' region signature appears at K266–S270. Position 269 (K269) interacts with ATP.

This sequence belongs to the class-I aminoacyl-tRNA synthetase family. In terms of assembly, monomer. Zn(2+) serves as cofactor.

It localises to the cytoplasm. The enzyme catalyses tRNA(Cys) + L-cysteine + ATP = L-cysteinyl-tRNA(Cys) + AMP + diphosphate. In Pectobacterium carotovorum subsp. carotovorum (strain PC1), this protein is Cysteine--tRNA ligase.